The sequence spans 446 residues: Putrescine N-hydroxylase (446 aa).

The FAD site is built by Phe-17, Asp-37, Ser-38, Lys-39, Trp-44, and His-45. Residues Thr-54, Gln-56, and Arg-98 each coordinate NADP(+). Gln-56 provides a ligand contact to FAD. Val-121 provides a ligand contact to FAD. NADP(+) contacts are provided by Ser-199, Lys-223, Tyr-267, and Leu-301. The FAD site is built by Asn-378, Pro-389, and Leu-391.

This sequence belongs to the lysine N(6)-hydroxylase/L-ornithine N(5)-oxygenase family. In terms of assembly, homotetramer. FAD is required as a cofactor.

The enzyme catalyses putrescine + NADPH + O2 = N-hydroxyputrescine + NADP(+) + H2O. Its pathway is siderophore biosynthesis. N-hydroxylating monooxygenase involved in the biosynthesis of fimsbactin A, the major siderophore produced by A.baumannii. Catalyzes the N-hydroxylation of the aliphatic diamine putrescine into N-hydroxyputrescine (NHP). Putrescine is the preferred substrate, but the enzyme can also catalyze the N-hydroxylation of cadaverine, with 4-fold lower catalytic efficiency. Cannot use lysine or ornithine as substrates. Uses both NADPH and NADH as the reducing cofactor with a preference for NADPH. The chain is Putrescine N-hydroxylase from Acinetobacter baumannii (strain ATCC 17978 / DSM 105126 / CIP 53.77 / LMG 1025 / NCDC KC755 / 5377).